Here is a 125-residue protein sequence, read N- to C-terminus: U-scoloptoxin(05)-Sm1a (125 aa).

The N-terminal stretch at 1 to 20 (MNVLYTKIFFILILTRTSSA) is a signal peptide.

It belongs to the scoloptoxin-05 family. Post-translationally, contains 4 disulfide bonds. In terms of tissue distribution, expressed by the venom gland.

The protein localises to the secreted. This Scolopendra morsitans (Tanzanian blue ringleg centipede) protein is U-scoloptoxin(05)-Sm1a.